The sequence spans 198 residues: Recombination protein RecR (198 aa).

The segment at 57 to 72 (CSVCGHITDKDPCYIC) adopts a C4-type zinc-finger fold. One can recognise a Toprim domain in the interval 80–175 (SVICVVQESK…KVTRIAHGLP (96 aa)).

It belongs to the RecR family.

In terms of biological role, may play a role in DNA repair. It seems to be involved in an RecBC-independent recombinational process of DNA repair. It may act with RecF and RecO. The protein is Recombination protein RecR of Listeria monocytogenes serotype 4b (strain CLIP80459).